The primary structure comprises 473 residues: Ribulose bisphosphate carboxylase large chain 2 (473 aa).

Substrate is bound by residues Asn116 and Thr166. The active-site Proton acceptor is Lys168. Lys170 contributes to the substrate binding site. 3 residues coordinate Mg(2+): Lys194, Asp196, and Glu197. Lys194 is subject to N6-carboxylysine. The active-site Proton acceptor is His287. Residues Arg288, His320, and Ser372 each contribute to the substrate site.

It belongs to the RuBisCO large chain family. Type I subfamily. As to quaternary structure, heterohexadecamer of 8 large chains and 8 small chains. Requires Mg(2+) as cofactor.

It catalyses the reaction 2 (2R)-3-phosphoglycerate + 2 H(+) = D-ribulose 1,5-bisphosphate + CO2 + H2O. It carries out the reaction D-ribulose 1,5-bisphosphate + O2 = 2-phosphoglycolate + (2R)-3-phosphoglycerate + 2 H(+). Functionally, ruBisCO catalyzes two reactions: the carboxylation of D-ribulose 1,5-bisphosphate, the primary event in carbon dioxide fixation, as well as the oxidative fragmentation of the pentose substrate. Both reactions occur simultaneously and in competition at the same active site. This is Ribulose bisphosphate carboxylase large chain 2 from Cereibacter sphaeroides (strain ATCC 17025 / ATH 2.4.3) (Rhodobacter sphaeroides).